Consider the following 688-residue polypeptide: Glycine--tRNA ligase beta subunit (688 aa).

This sequence belongs to the class-II aminoacyl-tRNA synthetase family. In terms of assembly, tetramer of two alpha and two beta subunits.

It localises to the cytoplasm. It carries out the reaction tRNA(Gly) + glycine + ATP = glycyl-tRNA(Gly) + AMP + diphosphate. The chain is Glycine--tRNA ligase beta subunit from Shewanella sp. (strain ANA-3).